The chain runs to 1400 residues: Clustered mitochondria protein homolog (1400 aa).

3 disordered regions span residues 1–39 (MVSK…KEAS), 56–78 (GHDQ…QAED), and 212–243 (GDTG…KERP). Positions 56–69 (GHDQAEEADSKQDG) are enriched in basic and acidic residues. In terms of domain architecture, Clu spans 380-622 (RAEDAYTSRL…RTFPPDLNFL (243 aa)). Positions 684–741 (AALQDSNAAGAGSENKPLALESCDGTPDSPTSSESTLTPEDSEATTVSENSSAENQEA) are disordered. A compositionally biased stretch (low complexity) spans 707-722 (DGTPDSPTSSESTLTP). Positions 727–741 (ATTVSENSSAENQEA) are enriched in polar residues. TPR repeat units follow at residues 1088-1121 (AFHF…FNNV), 1130-1163 (CACL…SERV), 1172-1205 (IQEY…MLVV), and 1214-1247 (ALLD…NTKY). Polar residues predominate over residues 1377–1388 (QDSGKIQEQQGS). The tract at residues 1377 to 1400 (QDSGKIQEQQGSHLELDDKLPVDD) is disordered. Residues 1390-1400 (LELDDKLPVDD) are compositionally biased toward basic and acidic residues.

It belongs to the CLU family.

The protein localises to the cytoplasm. In terms of biological role, mRNA-binding protein involved in proper cytoplasmic distribution of mitochondria. In Danio rerio (Zebrafish), this protein is Clustered mitochondria protein homolog.